The primary structure comprises 616 residues: Coagulation factor XII (616 aa).

The signal sequence occupies residues 1 to 19; it reads MRALLLLGILLVSLESALL. Residues 42–90 form the Fibronectin type-II domain; that stretch reads VTGEPCHFPFQYYRQLYYKCIQRGQRGPRPWCATTPNFEKDQRWAYCLE. 13 cysteine pairs are disulfide-bonded: Cys-47–Cys-73, Cys-61–Cys-88, Cys-98–Cys-110, Cys-104–Cys-119, Cys-121–Cys-130, Cys-135–Cys-163, Cys-161–Cys-170, Cys-178–Cys-189, Cys-183–Cys-198, Cys-200–Cys-209, Cys-217–Cys-295, Cys-238–Cys-277, and Cys-266–Cys-290. The EGF-like 1 domain maps to 94-131; the sequence is VKDHCNKGNPCQKGGTCVNMPNGPHCICPDHFTGKHCQ. Thr-109 carries O-linked (Fuc) threonine glycosylation. One can recognise a Fibronectin type-I domain in the interval 133 to 173; it reads EKCFEPQFLQFFQENEIWHRFEPAGVSKCQCKGPKAQCKPV. An EGF-like 2 domain is found at 174 to 210; it reads ASQVCSTNPCLNGGSCLQTEGHRLCRCPTGYAGRLCD. Positions 216–295 constitute a Kringle domain; the sequence is RCYSDRGLSY…SWQYCRLARC (80 aa). Asn-249, Asn-271, and Asn-335 each carry an N-linked (GlcNAc...) asparagine glycan. A disordered region spans residues 303–342; sequence PPILTPTQSPSEHQDSPLLSREPQPTTQTPSQNLTSAWCA. The segment covering 325-338 has biased composition (polar residues); the sequence is PQPTTQTPSQNLTS. 7 disulfides stabilise this stretch: Cys-358/Cys-485, Cys-396/Cys-412, Cys-404/Cys-474, Cys-435/Cys-438, Cys-501/Cys-570, Cys-533/Cys-549, and Cys-560/Cys-591. The region spanning 372 to 615 is the Peptidase S1 domain; sequence IVGGLVALPG…YLAWIQEHTT (244 aa). His-411 acts as the Charge relay system in catalysis. Asn-432 carries N-linked (GlcNAc...) asparagine glycosylation. Asp-460 functions as the Charge relay system in the catalytic mechanism. Ser-564 serves as the catalytic Charge relay system.

It belongs to the peptidase S1 family. As to quaternary structure, interacts with HRG; the interaction, which is enhanced in the presence of zinc ions and inhibited by heparin-binding, inhibits factor XII autoactivation and contact-initiated coagulation. Post-translationally, O- and N-glycosylated.

It localises to the secreted. The enzyme catalyses Selective cleavage of Arg-|-Ile bonds in factor VII to form factor VIIa and factor XI to form factor XIa.. With respect to regulation, activity is promoted in the presence of negatively charged surfaces. Its function is as follows. Factor XII is a serum glycoprotein that participates in the initiation of blood coagulation, fibrinolysis, and the generation of bradykinin and angiotensin. Prekallikrein is cleaved by factor XII to form kallikrein, which then cleaves factor XII first to alpha-factor XIIa and then trypsin cleaves it to beta-factor XIIa. Alpha-factor XIIa activates factor XI to factor XIa. The protein is Coagulation factor XII (F12) of Sus scrofa (Pig).